The primary structure comprises 936 residues: Aftiphilin (936 aa).

The disordered stretch occupies residues 1 to 36 (MEPDIIRMYSSSPPPLDNGAEDDDDDEFGEFGGFSE). Residues 1–523 (MEPDIIRMYS…ARKSSGTGTE (523 aa)) form an interaction with AP1G1, AP1G2, GGA1 and GGA3 region. The span at 19–29 (GAEDDDDDEFG) shows a compositional bias: acidic residues. A WXXF motif 1 motif is present at residues 28 to 31 (FGEF). Residue S151 is modified to Phosphoserine. Disordered stretches follow at residues 197–216 (TDDL…STHS) and 374–409 (KTSD…LDDS). Positions 374-389 (KTSDDEVGSPKEESRK) are enriched in basic and acidic residues. An interaction with AP1G1 region spans residues 386–610 (ESRKFTNFQS…EAWQSHRTDE (225 aa)). S395 is modified (phosphoserine). Residues 432–435 (FGDF) carry the WXXF motif 2 motif. The WXXF motif 3 (partial) signature appears at 436–438 (GDF). A WXXF motif 4 motif is present at residues 478–481 (FGEF). A Phosphoserine modification is found at S518. Residues 589–637 (GDQQATESHHRKEAWQSHRTDENIDTPGTPKTHSVPSATSKGAVASGHL) form a disordered region. The segment covering 595–610 (ESHHRKEAWQSHRTDE) has biased composition (basic and acidic residues). T617 is modified (phosphothreonine). A compositionally biased stretch (polar residues) spans 617–628 (TPKTHSVPSATS). A CLTCL1/Clathrin-binding motif is present at residues 716-718 (YQW). The tract at residues 825–829 (LLNLD) is clathrin-binding.

Self-associates. Interacts with GGA1 (via GAE domain). Interacts with GGA3 (via GAE domain), AP1G1 (via GAE domain) and AP1G2 (via GAE domain). Component of the aftiphilin/p200/gamma-synergin complex, at least composed of AFTPH/aftiphilin, HEATR5B/p200a and SYNRG/gamma-synergin, which plays a role in the AP1G1/AP-1-mediated protein trafficking from early to recycling endosomes. Within the complex interacts with HEATR5B/p200a and SYNRG/gamma-synergin; the interactions are direct. Interacts with AP1G1/AP-1; the interaction is required to recruit AFTPH/aftiphilin to the perinuclear region of the cell. Interacts with CLTCL1/Clathrin.

The protein resides in the cytoplasm. It localises to the perinuclear region. Its subcellular location is the cytoplasmic vesicle. The protein localises to the clathrin-coated vesicle. Its function is as follows. Component of clathrin-coated vesicles. Component of the aftiphilin/p200/gamma-synergin complex, which plays roles in AP1G1/AP-1-mediated protein trafficking including the trafficking of transferrin from early to recycling endosomes, and the membrane trafficking of furin and the lysosomal enzyme cathepsin D between the trans-Golgi network (TGN) and endosomes. This is Aftiphilin (AFTPH) from Homo sapiens (Human).